The following is an 86-amino-acid chain: Small ribosomal subunit protein bS16 (86 aa).

This sequence belongs to the bacterial ribosomal protein bS16 family.

In Hamiltonella defensa subsp. Acyrthosiphon pisum (strain 5AT), this protein is Small ribosomal subunit protein bS16.